Here is a 476-residue protein sequence, read N- to C-terminus: Protein transport protein Sec61 subunit alpha-like 2 (476 aa).

Residues A2–L33 lie on the Cytoplasmic side of the membrane. A helical membrane pass occupies residues W34–I53. At M54 to L76 the chain is on the lumenal side. A helical transmembrane segment spans residues M77 to G96. Residues A97–K117 lie on the Cytoplasmic side of the membrane. A helical transmembrane segment spans residues L118–G138. At D139 to G144 the chain is on the lumenal side. The chain crosses the membrane as a helical span at residues A145–L165. Topologically, residues D166–G172 are cytoplasmic. A helical transmembrane segment spans residues Y173–W193. Residues K194–P240 are Lumenal-facing. A helical transmembrane segment spans residues N241 to F261. At R262–N288 the chain is on the cytoplasmic side. Residues I289–S309 form a helical membrane-spanning segment. Residues T310–V354 lie on the Lumenal side of the membrane. A helical membrane pass occupies residues L355 to F375. Residues S376 to A420 lie on the Cytoplasmic side of the membrane. Residues A421–I441 form a helical membrane-spanning segment. Topologically, residues G442–T445 are lumenal. A helical transmembrane segment spans residues G446 to V462. The Cytoplasmic portion of the chain corresponds to K463–F476.

It belongs to the SecY/SEC61-alpha family. In terms of assembly, the SEC61 channel-forming translocon complex consists of channel-forming core components SEC61A1, SEC61B and SEC61G and different auxiliary components such as SEC62 and SEC63.

Its subcellular location is the endoplasmic reticulum membrane. Its function is as follows. Component of SEC61 channel-forming translocon complex that mediates transport of signal peptide-containing precursor polypeptides across the endoplasmic reticulum (ER). Forms a ribosome receptor and a gated pore in the ER membrane, both functions required for cotranslational translocation of nascent polypeptides. The chain is Protein transport protein Sec61 subunit alpha-like 2 (sec61al2) from Danio rerio (Zebrafish).